Reading from the N-terminus, the 318-residue chain is 2-oxoacid:ferredoxin oxidoreductase 1, subunit beta (318 aa).

3 residues coordinate [4Fe-4S] cluster: C18, C21, and C52. Residues 50–53 (IGCS) and H69 each bind thiamine diphosphate. Residue D94 participates in Mg(2+) binding. 95-96 (GD) is a binding site for thiamine diphosphate. The Mg(2+) site is built by N122 and V124. 126-127 (GL) contributes to the thiamine diphosphate binding site. Residue C201 participates in [4Fe-4S] cluster binding.

As to quaternary structure, heterodimer composed of an alpha and a beta subunit. Requires [4Fe-4S] cluster as cofactor. The cofactor is thiamine diphosphate. Mg(2+) serves as cofactor.

It carries out the reaction a 2-oxocarboxylate + 2 oxidized [2Fe-2S]-[ferredoxin] + CoA = an acyl-CoA + 2 reduced [2Fe-2S]-[ferredoxin] + CO2 + H(+). In terms of biological role, catalyzes the coenzyme A-dependent oxidative decarboxylation of different 2-oxoacids such as pyruvate, 2-oxobutyrate and glyoxylate to form their CoA derivatives. This is 2-oxoacid:ferredoxin oxidoreductase 1, subunit beta from Aeropyrum pernix (strain ATCC 700893 / DSM 11879 / JCM 9820 / NBRC 100138 / K1).